Consider the following 203-residue polypeptide: Guanylate kinase (203 aa).

One can recognise a Guanylate kinase-like domain in the interval 3–181 (GTLYIVAAPS…AVSEMCAIFT (179 aa)). An ATP-binding site is contributed by 10 to 17 (APSGAGKS).

This sequence belongs to the guanylate kinase family.

Its subcellular location is the cytoplasm. The enzyme catalyses GMP + ATP = GDP + ADP. In terms of biological role, essential for recycling GMP and indirectly, cGMP. This chain is Guanylate kinase, found in Xanthomonas oryzae pv. oryzae (strain MAFF 311018).